A 471-amino-acid polypeptide reads, in one-letter code: Putative multidrug resistance protein MdtD (471 aa).

Residues 1-11 (MTDLPDSTRWQ) are Periplasmic-facing. The chain crosses the membrane as a helical span at residues 12 to 32 (LWIVAFGFFMQSLDTTIVNTA). The Cytoplasmic portion of the chain corresponds to 33–48 (LPSMAQSLGESPLHMH). Residues 49 to 69 (MVIVSYVLTVAVMLPASGWLA) form a helical membrane-spanning segment. At 70-76 (DKVGVRN) the chain is on the periplasmic side. A helical membrane pass occupies residues 77–97 (IFFTAIVLFTLGSLFCALSGT). Over 98–101 (LNEL) the chain is Cytoplasmic. Residues 102 to 124 (LLARALQGVGGAMMVPVGRLTVM) traverse the membrane as a helical segment. At 125–137 (KIVPREQYMAAMT) the chain is on the periplasmic side. Residues 138–158 (FVTLPGQIGPLLGPALGGLLV) form a helical membrane-spanning segment. At 159-164 (EYASWH) the chain is on the cytoplasmic side. Residues 165 to 185 (WIFLINIPVGIIGAITTLMLM) form a helical membrane-spanning segment. Topologically, residues 186–196 (PNYTMQTRRFD) are periplasmic. The chain crosses the membrane as a helical span at residues 197–217 (LSGFLLLAVGMAVLTLALDGS). Residues 218 to 224 (KGTGFSP) lie on the Cytoplasmic side of the membrane. Residues 225–245 (LAIAGLVAVGVVALVLYLLHA) form a helical membrane-spanning segment. Over 246–262 (QNNNRALFSLKLFRTRT) the chain is Periplasmic. Residues 263–283 (FSLGLAGSFAGRIGSGMLPFM) form a helical membrane-spanning segment. Residues 284–285 (TP) lie on the Cytoplasmic side of the membrane. A helical transmembrane segment spans residues 286–306 (VFLQIGFGFSPFHAGLMMIPM). The Periplasmic segment spans residues 307–341 (VLGSMGMKRIVVQVVNRFGYRRVLVATTLGLSLVT). Residues 342 to 362 (LLFMTTALLGWYYVLPFVLFL) form a helical membrane-spanning segment. The Cytoplasmic portion of the chain corresponds to 363–395 (QGMVNSTRFSSMNTLTLKDLPDNLASSGNSLLS). Residues 396 to 416 (MIMQLSMSIGVTIAGLLLGLF) form a helical membrane-spanning segment. The Periplasmic segment spans residues 417–430 (GSQHVSVDSGTTQT). Residues 431–451 (VFMYTWLSMASIIALPAFIFA) form a helical membrane-spanning segment. Residues 452–471 (RVPNDTHQNVAISRRKRSAQ) lie on the Cytoplasmic side of the membrane.

The protein belongs to the major facilitator superfamily. TCR/Tet family.

The protein resides in the cell inner membrane. The protein is Putative multidrug resistance protein MdtD of Escherichia coli O6:H1 (strain CFT073 / ATCC 700928 / UPEC).